Reading from the N-terminus, the 573-residue chain is MFRLPVSLARSSISRQLAMRGYAKDVRFGPEVRAMMLQGVDVLADAVAVTMGPKGRNVIIEQSWGSPKITKDGVTVAKSIELKDKFQNIGAKLVQDVANNTNEEAGDGTTTATVLARAIAKEGFEKISKGANPVEIRRGVMLAVETVKDNLKTMSRPVSTPEEIAQVATISANGDQAIGNLISEAMKKVGRDGVITVKDGKTLTDELEVIEGMKFDRGYISPYFINSSKGAKVEFQDALLLLSEKKISSVQSIIPALELANAQRKPLVIIAEDIDGEALSTLVVNRLKIGLQVAAVKAPGFGDNRKSTLTDMAIASGGIVFGDDADLVKLEDVKVSDLGQVGEVVITKDDTLLLKGKGKKDDVLRRANQIKDQIEDTTSEYEKEKLQERLARLASGVALLRVGGSSEVEVNEKKDRVHDALNATRAAVEEGIVPGGGTALLRCIEKLEGVETTNEDQKLGVEIVRRALRMPCMTIAKNAGVDGAMVVAKVENQAGDYGYDALKGEYGNLIEKGIIDPTKVVRTAITDASGVASLLTTAEAVVTEIPKEDGAPAMPGMGGMGGMGGMGGMGGMM.

The N-terminal 57 residues, 1 to 57 (MFRLPVSLARSSISRQLAMRGYAKDVRFGPEVRAMMLQGVDVLADAVAVTMGPKGRN), are a transit peptide targeting the mitochondrion.

The protein belongs to the chaperonin (HSP60) family.

The protein localises to the mitochondrion matrix. Functionally, prevents misfolding and promotes the refolding and proper assembly of unfolded polypeptides generated under stress conditions. In Drosophila melanogaster (Fruit fly), this protein is Heat shock protein 60A.